The primary structure comprises 106 residues: Putative cytochrome c oxidase subunit 7A3, mitochondrial (106 aa).

Residues 1–23 constitute a mitochondrion transit peptide; it reads MLWNLLALHQIGQRTISTASHRH.

This sequence belongs to the cytochrome c oxidase VIIa family.

It localises to the mitochondrion inner membrane. This chain is Putative cytochrome c oxidase subunit 7A3, mitochondrial (COX7A2P2), found in Homo sapiens (Human).